A 561-amino-acid chain; its full sequence is Methionine--tRNA ligase (561 aa).

A 'HIGH' region motif is present at residues 11–21; the sequence is PYVNTVPHLGN. Residues C143, C146, C156, and C159 each contribute to the Zn(2+) site. K334 is a binding site for ATP.

The protein belongs to the class-I aminoacyl-tRNA synthetase family. MetG type 1 subfamily. Requires Zn(2+) as cofactor.

It localises to the cytoplasm. The enzyme catalyses tRNA(Met) + L-methionine + ATP = L-methionyl-tRNA(Met) + AMP + diphosphate. Functionally, is required not only for elongation of protein synthesis but also for the initiation of all mRNA translation through initiator tRNA(fMet) aminoacylation. The sequence is that of Methionine--tRNA ligase from Ignicoccus hospitalis (strain KIN4/I / DSM 18386 / JCM 14125).